The chain runs to 149 residues: Calmodulin (149 aa).

Ala-2 is subject to N-acetylalanine. EF-hand domains follow at residues 8–43 (EQIA…LGQN), 44–79 (PTEA…KMKD), 81–116 (DSEE…LGEK), and 117–149 (LTDE…MTAK). Residues Asp-21, Asp-23, Asp-25, Thr-27, Glu-32, Asp-57, Asp-59, Asn-61, Thr-63, Glu-68, Asp-94, Asp-96, Asn-98, Tyr-100, and Glu-105 each contribute to the Ca(2+) site. Lys-116 bears the N6,N6,N6-trimethyllysine mark. Ca(2+)-binding residues include Asp-130, Asp-132, Asp-134, Gln-136, and Glu-141.

The protein belongs to the calmodulin family.

Functionally, calmodulin acts as part of a calcium signal transduction pathway by mediating the control of a large number of enzymes, ion channels, aquaporins and other proteins through calcium-binding. Calcium-binding is required for the activation of calmodulin. Among the enzymes to be stimulated by the calmodulin-calcium complex are a number of protein kinases, such as myosin light-chain kinases and calmodulin-dependent protein kinase type II (CaMK2), and phosphatases. The sequence is that of Calmodulin (calm) from Oreochromis mossambicus (Mozambique tilapia).